The primary structure comprises 314 residues: tRNA dimethylallyltransferase 2 (314 aa).

8–15 contacts ATP; that stretch reads GPTGSGKS. A substrate-binding site is contributed by 10 to 15; the sequence is TGSGKS.

Belongs to the IPP transferase family. In terms of assembly, monomer. It depends on Mg(2+) as a cofactor.

It carries out the reaction adenosine(37) in tRNA + dimethylallyl diphosphate = N(6)-dimethylallyladenosine(37) in tRNA + diphosphate. Functionally, catalyzes the transfer of a dimethylallyl group onto the adenine at position 37 in tRNAs that read codons beginning with uridine, leading to the formation of N6-(dimethylallyl)adenosine (i(6)A). This chain is tRNA dimethylallyltransferase 2, found in Mycobacterium marinum (strain ATCC BAA-535 / M).